Consider the following 518-residue polypeptide: Putative ribose/galactose/methyl galactoside import ATP-binding protein (518 aa).

The interval 1–22 (MSIAVLDRPMSRQDTPSASSVP) is disordered. The span at 12 to 22 (RQDTPSASSVP) shows a compositional bias: polar residues. ABC transporter domains lie at 29–265 (LEVR…VGRE) and 275–515 (VPIG…VMEL). Residue 61–68 (GENGAGKS) coordinates ATP.

This sequence belongs to the ABC transporter superfamily. Carbohydrate importer 2 (CUT2) (TC 3.A.1.2) family.

Its subcellular location is the cell inner membrane. It carries out the reaction D-ribose(out) + ATP + H2O = D-ribose(in) + ADP + phosphate + H(+). The enzyme catalyses D-galactose(out) + ATP + H2O = D-galactose(in) + ADP + phosphate + H(+). Its function is as follows. Part of an ABC transporter complex involved in carbohydrate import. Could be involved in ribose, galactose and/or methyl galactoside import. Responsible for energy coupling to the transport system. This Ralstonia nicotianae (strain ATCC BAA-1114 / GMI1000) (Ralstonia solanacearum) protein is Putative ribose/galactose/methyl galactoside import ATP-binding protein.